A 131-amino-acid chain; its full sequence is Small ribosomal subunit protein uS11 (131 aa).

The protein belongs to the universal ribosomal protein uS11 family. Part of the 30S ribosomal subunit. Interacts with proteins S7 and S18. Binds to IF-3.

In terms of biological role, located on the platform of the 30S subunit, it bridges several disparate RNA helices of the 16S rRNA. Forms part of the Shine-Dalgarno cleft in the 70S ribosome. This is Small ribosomal subunit protein uS11 from Helicobacter pylori (strain P12).